The primary structure comprises 187 residues: UPF0301 protein YqgE (187 aa).

Belongs to the UPF0301 (AlgH) family.

This is UPF0301 protein YqgE from Escherichia coli O127:H6 (strain E2348/69 / EPEC).